A 152-amino-acid polypeptide reads, in one-letter code: Large ribosomal subunit protein uL13 (152 aa).

This sequence belongs to the universal ribosomal protein uL13 family. Part of the 50S ribosomal subunit.

In terms of biological role, this protein is one of the early assembly proteins of the 50S ribosomal subunit, although it is not seen to bind rRNA by itself. It is important during the early stages of 50S assembly. The chain is Large ribosomal subunit protein uL13 from Wolbachia pipientis subsp. Culex pipiens (strain wPip).